The sequence spans 269 residues: Ribosomal RNA small subunit methyltransferase A (269 aa).

S-adenosyl-L-methionine is bound by residues Ile-17, Gly-42, Glu-64, Asp-89, and Asn-109.

It belongs to the class I-like SAM-binding methyltransferase superfamily. rRNA adenine N(6)-methyltransferase family. RsmA subfamily.

Its subcellular location is the cytoplasm. It carries out the reaction adenosine(1518)/adenosine(1519) in 16S rRNA + 4 S-adenosyl-L-methionine = N(6)-dimethyladenosine(1518)/N(6)-dimethyladenosine(1519) in 16S rRNA + 4 S-adenosyl-L-homocysteine + 4 H(+). Its function is as follows. Specifically dimethylates two adjacent adenosines (A1518 and A1519) in the loop of a conserved hairpin near the 3'-end of 16S rRNA in the 30S particle. May play a critical role in biogenesis of 30S subunits. The protein is Ribosomal RNA small subunit methyltransferase A of Anaplasma phagocytophilum (strain HZ).